The primary structure comprises 362 residues: 3-isopropylmalate dehydrogenase (362 aa).

An NAD(+)-binding site is contributed by 75–88 (GPKWANLPPTEQPE). The substrate site is built by Arg96, Arg106, Arg135, and Asp224. Mg(2+)-binding residues include Asp224, Asp248, and Asp252. Residue 282–294 (GSAPDIAGLGVAN) participates in NAD(+) binding.

It belongs to the isocitrate and isopropylmalate dehydrogenases family. LeuB type 1 subfamily. In terms of assembly, homodimer. It depends on Mg(2+) as a cofactor. Mn(2+) is required as a cofactor.

It localises to the cytoplasm. It catalyses the reaction (2R,3S)-3-isopropylmalate + NAD(+) = 4-methyl-2-oxopentanoate + CO2 + NADH. Its pathway is amino-acid biosynthesis; L-leucine biosynthesis; L-leucine from 3-methyl-2-oxobutanoate: step 3/4. In terms of biological role, catalyzes the oxidation of 3-carboxy-2-hydroxy-4-methylpentanoate (3-isopropylmalate) to 3-carboxy-4-methyl-2-oxopentanoate. The product decarboxylates to 4-methyl-2 oxopentanoate. This is 3-isopropylmalate dehydrogenase from Colwellia psychrerythraea (strain 34H / ATCC BAA-681) (Vibrio psychroerythus).